We begin with the raw amino-acid sequence, 401 residues long: MVKFDSGSESEMTNGDELHINSKHEVKSRMANGNGVHNVPDHDQFQDRAEMEVLILPDLFSSLMSVPARENPHYASVKADADEWISFVINADAKWASRNKRVDFTYLASIWAPDCSAFALRTSADWNSWAFLFDDQFDEGHLSNDLEGAINEIARTREIMEGTAPRYTADSEHPIRYVFQTLCDRVKQNPEGFYAGKPSSERFYRRWMWAHELYWEGLVAQVRTNVEGRSFTRGPEEYLAMRRGSLGAYPALVNNEWAYGIDLPEEVADHPLVFEIMIIMSDQILLVKDILSYEKDLRLGVDHNMVRLLKAKGLSTQQAINEVGVMINNCYRRYYRALSELPCFGEEADRALLGYLEVEKNHALGSLLWSYNTGRYFKSKEDGARVRKTRELLIPKKMAAL.

The interval 1 to 20 (MVKFDSGSESEMTNGDELHI) is disordered. Residues Asp134 and Glu139 each coordinate Mg(2+). The short motif at 134–138 (DDQFD) is the DDXXD motif element. Arg242 contributes to the substrate binding site. Residue Ser292 coordinates Mg(2+). Lys295 provides a ligand contact to substrate. Residue Asp296 participates in Mg(2+) binding. Substrate is bound at residue 375-376 (RY).

The protein belongs to the terpene synthase family. Mg(2+) is required as a cofactor.

In Gibberella fujikuroi (strain CBS 195.34 / IMI 58289 / NRRL A-6831) (Bakanae and foot rot disease fungus), this protein is Inactive (1R,4R,5S)-(-)-guaia-6,10(14)-diene synthase.